Reading from the N-terminus, the 194-residue chain is Imidazole glycerol phosphate synthase subunit HisH (194 aa).

The region spanning 3–194 (RIAIVDLGIG…LILLRNFRRL (192 aa)) is the Glutamine amidotransferase type-1 domain. Cys74 serves as the catalytic Nucleophile. Active-site residues include His176 and Glu178.

In terms of assembly, heterodimer of HisH and HisF.

It is found in the cytoplasm. The enzyme catalyses 5-[(5-phospho-1-deoxy-D-ribulos-1-ylimino)methylamino]-1-(5-phospho-beta-D-ribosyl)imidazole-4-carboxamide + L-glutamine = D-erythro-1-(imidazol-4-yl)glycerol 3-phosphate + 5-amino-1-(5-phospho-beta-D-ribosyl)imidazole-4-carboxamide + L-glutamate + H(+). It catalyses the reaction L-glutamine + H2O = L-glutamate + NH4(+). It functions in the pathway amino-acid biosynthesis; L-histidine biosynthesis; L-histidine from 5-phospho-alpha-D-ribose 1-diphosphate: step 5/9. Functionally, IGPS catalyzes the conversion of PRFAR and glutamine to IGP, AICAR and glutamate. The HisH subunit catalyzes the hydrolysis of glutamine to glutamate and ammonia as part of the synthesis of IGP and AICAR. The resulting ammonia molecule is channeled to the active site of HisF. The polypeptide is Imidazole glycerol phosphate synthase subunit HisH (Pyrococcus furiosus (strain ATCC 43587 / DSM 3638 / JCM 8422 / Vc1)).